The chain runs to 339 residues: NADH-quinone oxidoreductase subunit H (339 aa).

9 consecutive transmembrane segments (helical) span residues 9–29, 50–70, 82–102, 115–135, 161–181, 187–207, 235–255, 275–295, and 311–331; these read IFPL…LILC, PNVV…KLLF, ILFI…WAVI, VGVL…IIAG, MGLV…SEII, MPWW…ISVL, MGFA…SAMT, IPGF…FLWI, and GWKV…SVLV.

The protein belongs to the complex I subunit 1 family. In terms of assembly, NDH-1 is composed of 14 different subunits. Subunits NuoA, H, J, K, L, M, N constitute the membrane sector of the complex.

Its subcellular location is the cell membrane. The catalysed reaction is a quinone + NADH + 5 H(+)(in) = a quinol + NAD(+) + 4 H(+)(out). NDH-1 shuttles electrons from NADH, via FMN and iron-sulfur (Fe-S) centers, to quinones in the respiratory chain. The immediate electron acceptor for the enzyme in this species is believed to be ubiquinone. Couples the redox reaction to proton translocation (for every two electrons transferred, four hydrogen ions are translocated across the cytoplasmic membrane), and thus conserves the redox energy in a proton gradient. This subunit may bind ubiquinone. This chain is NADH-quinone oxidoreductase subunit H, found in Rickettsia africae (strain ESF-5).